A 319-amino-acid chain; its full sequence is MADKVQTTLLFLAVGEFSVGILGNAFIGLVNCMDWVKKRKIASIDLILTSLAISRICLLCVILLDCFILVLYPDVYATGKEMRIIDFFWTLTNHLSIWFATCLSIYYXFRIANFFHPLFLWMKWRIDRVISWILLGCVVLSVFISLPATENLNADFRFCVKAKRKTNLTWSCRVNKTQHASTKLFLNLATLLPFCVCLMSFFLLILSLRRHIRRMQLSATGCRDPSTEAHVRALKAVISFLLLFIAYYLSFLVATSSYFMPETELAVIFGESIALIYPSSHSFILILGNNKLRHASLKVIWKVMSILKGRKFQQHKQIG.

Topologically, residues 1-9 (MADKVQTTL) are extracellular. Residues 10-30 (LFLAVGEFSVGILGNAFIGLV) form a helical membrane-spanning segment. Residues 31–55 (NCMDWVKKRKIASIDLILTSLAISR) lie on the Cytoplasmic side of the membrane. Residues 56–76 (ICLLCVILLDCFILVLYPDVY) traverse the membrane as a helical segment. Residues 77–94 (ATGKEMRIIDFFWTLTNH) are Extracellular-facing. Residues 95 to 115 (LSIWFATCLSIYYXFRIANFF) traverse the membrane as a helical segment. At 116–128 (HPLFLWMKWRIDR) the chain is on the cytoplasmic side. A helical membrane pass occupies residues 129 to 149 (VISWILLGCVVLSVFISLPAT). Topologically, residues 150-187 (ENLNADFRFCVKAKRKTNLTWSCRVNKTQHASTKLFLN) are extracellular. 2 N-linked (GlcNAc...) asparagine glycosylation sites follow: Asn167 and Asn175. The helical transmembrane segment at 188–208 (LATLLPFCVCLMSFFLLILSL) threads the bilayer. The Cytoplasmic segment spans residues 209-235 (RRHIRRMQLSATGCRDPSTEAHVRALK). A helical transmembrane segment spans residues 236-256 (AVISFLLLFIAYYLSFLVATS). The Extracellular segment spans residues 257–266 (SYFMPETELA). A helical transmembrane segment spans residues 267–287 (VIFGESIALIYPSSHSFILIL). The Cytoplasmic portion of the chain corresponds to 288–319 (GNNKLRHASLKVIWKVMSILKGRKFQQHKQIG).

This sequence belongs to the G-protein coupled receptor T2R family.

It is found in the membrane. In terms of biological role, gustducin-coupled receptor implicated in the perception of bitter compounds in the oral cavity and the gastrointestinal tract. Signals through PLCB2 and the calcium-regulated cation channel TRPM5. In Pan troglodytes (Chimpanzee), this protein is Taste receptor type 2 member 7 (TAS2R7).